Reading from the N-terminus, the 701-residue chain is Arachidonate 12-lipoxygenase, 12R-type (701 aa).

The PLAT domain occupies A2–K119. One can recognise a Lipoxygenase domain in the interval I120 to I701. Positions 398, 403, 578, 582, and 701 each coordinate Fe cation.

This sequence belongs to the lipoxygenase family. Fe cation is required as a cofactor. In terms of tissue distribution, expressed in skin epidermis and other stratified epithelia including tongue and forestomach. Low levels of expression are found in trachea, brain and lung. Not expressed in intestine, liver, kidney, adipose tissue, muscle or hematopoietic cells.

The protein localises to the cytoplasm. It is found in the perinuclear region. It carries out the reaction 1-O-methyl-(5Z,8Z,11Z,14Z)-eicosatetraenoate + O2 = 1-O-methyl (5Z,8Z,10E,12R,14Z)-hydroperoxyiecosatetraenoate. The enzyme catalyses 1-O-methyl-(5Z,8Z,11Z,14Z)-eicosatetraenoate + O2 = 1-O-methyl-8-hydroperoxy-(5Z,9E,11Z,14Z)-eicosatetraenoate. It catalyses the reaction (5Z,8Z,11Z,14Z)-eicosatetraenoate + O2 = (12R)-hydroperoxy-(5Z,8Z,10E,14Z)-eicosatetraenoate. The catalysed reaction is N-[omega-(9Z,12Z)-octadecadienoyloxy]acyl-beta-D-glucosyl-(1&lt;-&gt;1)-octadecasphing-4E-enine + O2 = N-[omega-(9R)-hydroperoxy-(10E,12Z)-octadecadienoyloxy]acyl-beta-D-glucosyl-(1&lt;-&gt;1)-octadecasphing-4E-enine. It carries out the reaction a N-[omega-(9Z,12Z)-octadecadienoyloxy]-acylsphin-4E-enine + O2 = a N-[omega-(9R)-hydroperoxy-(10E,12Z)-octadecadienoyloxy]-acylsphin-4E-enine. The enzyme catalyses (6Z,9Z,12Z)-octadecatrienoate + O2 = 10-hydroperoxy-(6Z,8E,12Z)-octadecatrienoate. It catalyses the reaction (4Z,7Z,10Z,13Z,16Z,19Z)-docosahexaenoate + O2 = 14-hydroperoxy-(4Z,7Z,10Z,12E,16Z,19Z)-docosahexaenoate. The catalysed reaction is (8Z,11Z,14Z)-eicosatrienoate + O2 = (8Z,10E,14Z)-12-hydroperoxyeicosatrienoate. It carries out the reaction (5Z,8Z,11Z,14Z,17Z)-eicosapentaenoate + O2 = (5Z,7Z,8Z,10E,14Z,17Z)-12-hydroperoxyeicosapentaenoate. The enzyme catalyses (6Z,9Z,12Z)-octadecatrienoate + O2 = 10R-hydroperoxy-(6Z,8E,12Z)-octadecatrienoate. It catalyses the reaction 1-O-methyl-(5Z,8Z,11Z,14Z)-eicosatetraenoate + O2 = 1-O-methyl-(8R)-hydroperoxy-(5Z,9E,11Z,14Z)-eicosatrienoate. The catalysed reaction is 1-O-methyl-(9Z,12Z)-octadecadienoate + O2 = 1-O-methyl-(9R)-hydroperoxy-(10E,12Z)-octadecadienoate. It carries out the reaction 1-O-methyl-20-hydroxy-(5Z,8Z,11Z,14Z)-eicosatetraenoate + O2 = 1-O-methyl-8-hydroperoxy-20-hydroxy-(5Z,9E,11Z,14Z)-eicosatetraenoate. The enzyme catalyses 1-O-methyl-20-hydroxy-(5Z,8Z,11Z,14Z)-eicosatetraenoate + O2 = 1-O-methyl-12-hydroperoxy-20-hydroxy-(5Z,8Z,10E,14Z)-eicosatetraenoate. It catalyses the reaction 1-O-methyl-20-hydroxy-(5Z,8Z,11Z,14Z)-eicosatetraenoate + O2 = 1-O-methyl-9-hydroperoxy-20-hydroxy-(5Z,7E,11Z,14Z)-eicosatetraenoate. The catalysed reaction is 1-O-methyl-(9Z,12Z)-octadecadienoate + O2 = 1-O-methyl-(13S)-hydroperoxy-(9Z,11E)-octadecadienoate. The protein operates within lipid metabolism; hydroperoxy eicosatetraenoic acid biosynthesis. Its pathway is lipid metabolism; sphingolipid metabolism. With respect to regulation, increased by calcium. Catalyzes the regio and stereo-specific incorporation of a single molecule of dioxygen into free and esterified polyunsaturated fatty acids generating lipid hydroperoxides that can be further reduced to the corresponding hydroxy species. Does not convert arachidonic acid to (12R)-hydroperoxyeicosatetraenoic acid/(12R)-HPETE. In the skin, acts upstream of ALOXE3 on the lineolate moiety of esterified omega-hydroxyacyl-sphingosine (EOS) ceramides to produce an epoxy-ketone derivative, a crucial step in the conjugation of omega-hydroxyceramide to membrane proteins. Therefore plays a crucial role in the synthesis of corneocytes lipid envelope and the establishment of the skin barrier to water loss. May also play a role in the regulation of the expression of airway mucins. In Mus musculus (Mouse), this protein is Arachidonate 12-lipoxygenase, 12R-type.